The following is a 329-amino-acid chain: Fructose-1,6-bisphosphatase class 1 (329 aa).

Mg(2+) contacts are provided by glutamate 84, aspartate 103, leucine 105, and aspartate 106. Substrate contacts are provided by residues 106–109, asparagine 196, and lysine 262; that span reads DGSS. Glutamate 268 is a binding site for Mg(2+).

This sequence belongs to the FBPase class 1 family. As to quaternary structure, homotetramer. Mg(2+) is required as a cofactor.

The protein localises to the cytoplasm. It carries out the reaction beta-D-fructose 1,6-bisphosphate + H2O = beta-D-fructose 6-phosphate + phosphate. Its pathway is carbohydrate biosynthesis; gluconeogenesis. This is Fructose-1,6-bisphosphatase class 1 from Shewanella pealeana (strain ATCC 700345 / ANG-SQ1).